An 86-amino-acid polypeptide reads, in one-letter code: Small ribosomal subunit protein bS18c (86 aa).

This sequence belongs to the bacterial ribosomal protein bS18 family. In terms of assembly, part of the 30S ribosomal subunit.

Its subcellular location is the plastid. It is found in the chloroplast. The chain is Small ribosomal subunit protein bS18c from Pseudotsuga menziesii (Douglas-fir).